A 417-amino-acid chain; its full sequence is uncharacterized protein (417 aa).

2 disordered regions span residues 1-41 (MDSE…EDQA) and 233-262 (QDSA…STRS). Residues 31–41 (DEDHIFHEDQA) show a composition bias toward basic and acidic residues. Residues 235–245 (SAYNDQAPSTS) show a composition bias toward polar residues.

This is an uncharacterized protein from Caenorhabditis elegans.